We begin with the raw amino-acid sequence, 393 residues long: Cysteine protease ATG4B (393 aa).

Met1 bears the N-acetylmethionine mark. The residue at position 34 (Ser34) is a Phosphoserine. The Nucleophile role is filled by Cys74. Cys189 bears the S-nitrosocysteine mark. Residues Asp278 and His280 contribute to the active site. S-nitrosocysteine is present on residues Cys292 and Cys301. Cys292 and Cys361 form a disulfide bridge. Phosphoserine occurs at positions 316 and 383. The short motif at 388–391 is the LIR element; it reads FEIL. At Ser392 the chain carries Phosphoserine.

Belongs to the peptidase C54 family. As to quaternary structure, interacts with PFKP; promoting phosphorylation of ATG4B at Ser-34. Interacts with GBP7. Phosphorylation at Ser-383 and Ser-392 promotes autophagy by increasing protein delipidation activity without affecting proteolytic activation of ATG8 proteins. Phosphorylation at Ser-316 by ULK1 inhibits autophagy by decreasing both proteolytic activation and delipidation activities. Phosphorylation at Ser-316 is dephosphorylated by protein phosphatase 2A (PP2A). Phosphorylation at Ser-34 by AKT2 promotes its hydrolase activity, leading to increased proteolytic activation and delipidation of ATG8 family proteins. Phosphorylation at Ser-34 by AKT1 promotes mitochondrial localization and inhibition of the F1F0-ATP synthase activity, leading to elevation of mitochondrial reactive oxygen species (ROS). Post-translationally, ubiquitinated by RNF5, leading to its degradation by the proteasome. In terms of processing, S-nitrosylation at Cys-189 and Cys-292 in response to high glucose decreases both proteolytic activation and delipidation activities. O-glycosylated by OGT, leading to increase protease activity, thereby promoting the proteolytic activation of ATG8 family proteins. Post-translationally, forms reversible intrachain disulfide bonds in response to oxidative stress. Forms interchain disulfide bonds, leading to formation of homooligomers in response to oxidation.

It localises to the cytoplasm. It is found in the cytosol. The protein resides in the cytoplasmic vesicle. Its subcellular location is the autophagosome. The protein localises to the endoplasmic reticulum. It localises to the mitochondrion. It carries out the reaction [protein]-C-terminal L-amino acid-glycyl-phosphatidylethanolamide + H2O = [protein]-C-terminal L-amino acid-glycine + a 1,2-diacyl-sn-glycero-3-phosphoethanolamine. It catalyses the reaction [protein]-C-terminal L-amino acid-glycyl-phosphatidylserine + H2O = [protein]-C-terminal L-amino acid-glycine + a 1,2-diacyl-sn-glycero-3-phospho-L-serine. With respect to regulation, inhibited by N-ethylmaleimide. Redox-regulated during autophagy since reducing conditions activate ATG4A whereas an oxidizing environment such as the presence of H(2)O(2) inhibits its activity. The cysteine protease activity compounds is inhibited by styrylquinoline compounds 4-28 and LV-320. Cysteine protease that plays a key role in autophagy by mediating both proteolytic activation and delipidation of ATG8 family proteins. Required for canonical autophagy (macroautophagy), non-canonical autophagy as well as for mitophagy. The protease activity is required for proteolytic activation of ATG8 family proteins: cleaves the C-terminal amino acid of ATG8 proteins MAP1LC3A, MAP1LC3B, MAP1LC3C, GABARAPL1, GABARAPL2 and GABARAP, to reveal a C-terminal glycine. Exposure of the glycine at the C-terminus is essential for ATG8 proteins conjugation to phosphatidylethanolamine (PE) and insertion to membranes, which is necessary for autophagy. Protease activity is also required to counteract formation of high-molecular weight conjugates of ATG8 proteins (ATG8ylation): acts as a deubiquitinating-like enzyme that removes ATG8 conjugated to other proteins, such as ATG3. In addition to the protease activity, also mediates delipidation of ATG8 family proteins. Catalyzes delipidation of PE-conjugated forms of ATG8 proteins during macroautophagy. Also involved in non-canonical autophagy, a parallel pathway involving conjugation of ATG8 proteins to single membranes at endolysosomal compartments, by catalyzing delipidation of ATG8 proteins conjugated to phosphatidylserine (PS). Compared to other members of the family (ATG4A, ATG4C or ATG4C), constitutes the major protein for proteolytic activation of ATG8 proteins, while it displays weaker delipidation activity than other ATG4 paralogs. Involved in phagophore growth during mitophagy independently of its protease activity and of ATG8 proteins: acts by regulating ATG9A trafficking to mitochondria and promoting phagophore-endoplasmic reticulum contacts during the lipid transfer phase of mitophagy. Functionally, (Microbial infection) Mediates cleavage of an ATG8 protein homolog coded in the genome of cytopathogenic bovine viral diarrhea virus (BVDV). The protein is Cysteine protease ATG4B (ATG4B) of Bos taurus (Bovine).